Consider the following 147-residue polypeptide: Cytochrome c oxidase subunit 3 (147 aa).

The next 4 membrane-spanning stretches (helical) occupy residues 13-33, 48-68, 83-103, and 125-145; these read FQIPLLNTIILISSGVSVTWA, GLFITIILGIYFTILQAYEYF, FFMATGFHGLHVIIGTLFLLI, and AWYWHFVDVVWLFLYISIYWW.

Belongs to the cytochrome c oxidase subunit 3 family. As to quaternary structure, component of the cytochrome c oxidase (complex IV, CIV), a multisubunit enzyme composed of a catalytic core of 3 subunits and several supernumerary subunits. The complex exists as a monomer or a dimer and forms supercomplexes (SCs) in the inner mitochondrial membrane with ubiquinol-cytochrome c oxidoreductase (cytochrome b-c1 complex, complex III, CIII).

It localises to the mitochondrion inner membrane. It carries out the reaction 4 Fe(II)-[cytochrome c] + O2 + 8 H(+)(in) = 4 Fe(III)-[cytochrome c] + 2 H2O + 4 H(+)(out). In terms of biological role, component of the cytochrome c oxidase, the last enzyme in the mitochondrial electron transport chain which drives oxidative phosphorylation. The respiratory chain contains 3 multisubunit complexes succinate dehydrogenase (complex II, CII), ubiquinol-cytochrome c oxidoreductase (cytochrome b-c1 complex, complex III, CIII) and cytochrome c oxidase (complex IV, CIV), that cooperate to transfer electrons derived from NADH and succinate to molecular oxygen, creating an electrochemical gradient over the inner membrane that drives transmembrane transport and the ATP synthase. Cytochrome c oxidase is the component of the respiratory chain that catalyzes the reduction of oxygen to water. Electrons originating from reduced cytochrome c in the intermembrane space (IMS) are transferred via the dinuclear copper A center (CU(A)) of subunit 2 and heme A of subunit 1 to the active site in subunit 1, a binuclear center (BNC) formed by heme A3 and copper B (CU(B)). The BNC reduces molecular oxygen to 2 water molecules using 4 electrons from cytochrome c in the IMS and 4 protons from the mitochondrial matrix. This is Cytochrome c oxidase subunit 3 (COIII) from Spodoptera frugiperda (Fall armyworm).